Consider the following 603-residue polypeptide: DNA mismatch repair protein MutL (603 aa).

Positions 337–347 (ISKKQKEDQKS) are enriched in basic and acidic residues. The interval 337-383 (ISKKQKEDQKSEQIQMSFEENKPVKETPTLFSKPTIPEYVPSDEDAP) is disordered.

The protein belongs to the DNA mismatch repair MutL/HexB family.

This protein is involved in the repair of mismatches in DNA. It is required for dam-dependent methyl-directed DNA mismatch repair. May act as a 'molecular matchmaker', a protein that promotes the formation of a stable complex between two or more DNA-binding proteins in an ATP-dependent manner without itself being part of a final effector complex. The sequence is that of DNA mismatch repair protein MutL from Listeria monocytogenes serotype 4b (strain F2365).